The chain runs to 618 residues: Proline--tRNA ligase (618 aa).

Belongs to the class-II aminoacyl-tRNA synthetase family. ProS type 1 subfamily. As to quaternary structure, homodimer.

It localises to the cytoplasm. The catalysed reaction is tRNA(Pro) + L-proline + ATP = L-prolyl-tRNA(Pro) + AMP + diphosphate. Functionally, catalyzes the attachment of proline to tRNA(Pro) in a two-step reaction: proline is first activated by ATP to form Pro-AMP and then transferred to the acceptor end of tRNA(Pro). As ProRS can inadvertently accommodate and process non-cognate amino acids such as alanine and cysteine, to avoid such errors it has two additional distinct editing activities against alanine. One activity is designated as 'pretransfer' editing and involves the tRNA(Pro)-independent hydrolysis of activated Ala-AMP. The other activity is designated 'posttransfer' editing and involves deacylation of mischarged Ala-tRNA(Pro). The misacylated Cys-tRNA(Pro) is not edited by ProRS. This Streptococcus pyogenes serotype M3 (strain ATCC BAA-595 / MGAS315) protein is Proline--tRNA ligase.